We begin with the raw amino-acid sequence, 264 residues long: Short-chain dehydrogenase/reductase malC (264 aa).

A helical transmembrane segment spans residues 13–35 (GKNVLIIGGTSGIGFAVAQLVIE). T22, S23, I25, S45, N46, K49, D75, N88, R130, V202, and T204 together coordinate NADP(+). The N-linked (GlcNAc...) asparagine glycan is linked to N249.

The protein belongs to the short-chain dehydrogenases/reductases (SDR) family.

The protein localises to the membrane. It catalyses the reaction 1-hydroxy-3-{[2-(1,1-dimethylallyl)-indol-3-yl]methyl}-6H,7H,8H-5lambda(5)-pyrrolo[1,2-a]pyrazine + NADPH + H(+) = 1-hydroxy-3-{[2-(1,1-dimethylallyl)-indol-3-yl]methyl}-4H,6H,7H,8H-pyrrolo[1,2-a]pyrazine + NADP(+). It carries out the reaction 1-hydroxy-3-{[2-(1,1-dimethylallyl)-indol-3-yl]methyl}-4H,6H,7H,8H-pyrrolo[1,2-a]pyrazine = (+)-premalbrancheamide. It functions in the pathway alkaloid biosynthesis. Functionally, short-chain dehydrogenase/reductase; part of the gene cluster that mediates the biosynthesis of malbrancheamide, a dichlorinated fungal indole alkaloid that belongs to a family of natural products containing a characteristic bicyclo[2.2.2]diazaoctane core. The first step of malbrancheamide biosynthesis involves coupling of L-proline and L-tryptophan by malG, a bimodular NRPS, to produce L-Pro-L-Trp aldehyde through reductive offloading. This compound undergoes spontaneous cyclization and dehydration to give a dienamine which is reverse prenylated at C-2 by malE. The other prenyltransferase present in the cluster, malB, displays modest activity, suggesting that may be a redundant gene in the pathway. Subsequently, a [4+2] Diels-Alder cyclo-addition catalyzed by the bifunctional enzyme malC forms the characteristic bicyclo[2.2.2]diazaoctane ring of premalbrancheamid. The first reaction catalyzed is a NADPH-dependent reduction reaction in which the nicotinamide cofactor is a stoichiometric reagent. Either NADH or NADPH is effective as a cofactor. NADP(+) is required for stereocontrolled formation of premalbrancheamide, however it does not appear to be required as a formal stoichiometric reagent because the second reaction performed by malC, the [4+2] cycloaddition, is a balanced chemical reaction without requirement for hydride transfer to balance the reaction. Finally, the flavin-dependent halogenase malA catalyzes the iterative dichlorination of the indole ring of premalbrancheamide to yield C-9 monochlorinated malbrancheamide B, C-8 monochlorinated isomalbrancheamide B, and dichlorinated malbrancheamide. MalA is also able to brominate premalbrancheamide at C-9 to yield malbrancheamide C, and, to a lesser extend, at C-8 to yield isomalbrancheamide C. Finally, malA can brominate C-9 monochlorinated malbrancheamide B at C-8 to yield malbrancheamide D, or C-8 monochlorinated isomalbrancheamide B at C-9 to produce isomalbrancheamide D. The chain is Short-chain dehydrogenase/reductase malC from Malbranchea aurantiaca.